The chain runs to 138 residues: Centromere protein S (138 aa).

Residue methionine 1 is modified to N-acetylmethionine. The tract at residues 110-138 (RKAQKKKKSEDGSKNSRQPAEAGVVESEN) is disordered.

The protein belongs to the TAF9 family. CENP-S/MHF1 subfamily. In terms of assembly, heterodimer with CENPX, sometimes called MHF; this interaction stabilizes both partners. MHF heterodimers can assemble to form tetrameric structures. MHF also coassemble with CENPT-CENPW heterodimers at centromeres to form the tetrameric CENP-T-W-S-X complex. Forms a discrete complex with FANCM and CENPX, called FANCM-MHF; this interaction, probably mediated by direct binding between CENPS and FANCM, leads to synergistic activation of double-stranded DNA binding and strongly stimulates FANCM-mediated DNA remodeling. Recruited by FANCM to the Fanconi anemia (FA) core complex, which consists of CENPS, CENPX, FANCA, FANCB, FANCC, FANCE, FANCF, FANCG, FANCL, FANCM, FAAP24 and FAAP100. The FA core complex associates with Bloom syndrome (BLM) complex, which consists of at least BLM, DNA topoisomerase 3-alpha (TOP3A), RMI1/BLAP75, RPA1/RPA70 and RPA2/RPA32. The super complex between FA and BLM is called BRAFT. Component of the CENPA-CAD complex, composed of CENPI, CENPK, CENPL, CENPO, CENPP, CENPQ, CENPR and CENPS. The CENPA-CAD complex is probably recruited on centromeres by the CENPA-NAC complex, composed of at least CENPA, CENPC, CENPH, CENPM, CENPN, CENPT and CENPU. As to expression, ubiquitously expressed.

It is found in the nucleus. It localises to the chromosome. The protein localises to the centromere. Its subcellular location is the kinetochore. DNA-binding component of the Fanconi anemia (FA) core complex. Required for the normal activation of the FA pathway, leading to monoubiquitination of the FANCI-FANCD2 complex in response to DNA damage, cellular resistance to DNA cross-linking drugs, and prevention of chromosomal breakage. In complex with CENPX (MHF heterodimer), crucial cofactor for FANCM in both binding and ATP-dependent remodeling of DNA. Stabilizes FANCM. In complex with CENPX and FANCM (but not other FANC proteins), rapidly recruited to blocked forks and promotes gene conversion at blocked replication forks. In complex with CENPT, CENPW and CENPX (CENP-T-W-S-X heterotetramer), involved in the formation of a functional kinetochore outer plate, which is essential for kinetochore-microtubule attachment and faithful mitotic progression. As a component of MHF and CENP-T-W-S-X complexes, binds DNA and bends it to form a nucleosome-like structure. DNA-binding function is fulfilled in the presence of CENPX, with the following preference for DNA substates: Holliday junction &gt; double-stranded &gt; splay arm &gt; single-stranded. Does not bind DNA on its own. This chain is Centromere protein S (CENPS), found in Homo sapiens (Human).